The following is a 552-amino-acid chain: Iduronate 2-sulfatase (552 aa).

An N-terminal signal peptide occupies residues 1 to 29; the sequence is MSPPPPPPIWRQLSFSLLLGSFCIALESA. The propeptide occupies 30–35; the sequence is AQGNSA. Positions 47, 48, and 86 each coordinate Ca(2+). The active-site Nucleophile is Cys-86. Cys-86 carries the 3-oxoalanine (Cys) modification. Asn-117 carries N-linked (GlcNAc...) asparagine glycosylation. The active site involves His-140. Asn-146 is a glycosylation site (N-linked (GlcNAc...) asparagine). Cys-173 and Cys-186 are disulfide-bonded. 2 N-linked (GlcNAc...) asparagine glycosylation sites follow: Asn-248 and Asn-282. Ca(2+) is bound by residues Asp-336 and His-337. Cys-424 and Cys-434 are disulfide-bonded. Residues Asn-515 and Asn-539 are each glycosylated (N-linked (GlcNAc...) asparagine).

The protein belongs to the sulfatase family. As to quaternary structure, monomer. The 58-kDa mature form is composed of two chains resulting from proteolitic processing, the 42-kDa chain and the 14-kDa chain that remain stably associated and form the 58-kDa intermediate form which is enzymatically active. It depends on Ca(2+) as a cofactor. Post-translationally, synthesized as a 75-kDa precursor form in the endoplasmic reticulum (ER), and then processed by proteolytic cleavage through various intermediates to yield a 55-kDa mature form, with the release of an 18 kDa polypeptide. In terms of processing, the conversion to 3-oxoalanine (also known as C-formylglycine, FGly), of a serine or cysteine residue in prokaryotes and of a cysteine residue in eukaryotes, is critical for catalytic activity. Found to be expressed in alpha and beta pancreatic cells.

The protein resides in the lysosome. The enzyme catalyses Hydrolysis of the 2-sulfate groups of the L-iduronate 2-sulfate units of dermatan sulfate, heparan sulfate and heparin.. Its function is as follows. Lysosomal enzyme involved in the degradation pathway of dermatan sulfate and heparan sulfate. The sequence is that of Iduronate 2-sulfatase (Ids) from Mus musculus (Mouse).